We begin with the raw amino-acid sequence, 493 residues long: 5'-3' exonuclease PLD3 (493 aa).

The Cytoplasmic segment spans residues 1-37 (MSSKVEYKPIQPHEEAENHFLQHELHKVKARKYYRCA). Residues 38 to 58 (LVVAIIITLVFCILASQLLLF) form a helical; Signal-anchor for type II membrane protein membrane-spanning segment. Over 59–493 (PFLSITSQTT…LSSWKEKCIF (435 aa)) the chain is Lumenal. A glycan (N-linked (GlcNAc...) asparagine) is linked at Asn99. One can recognise a PLD phosphodiesterase 1 domain in the interval 197-224 (TDGILHTKFWVVDNEHFYIGSANMDWRS). Catalysis depends on residues His202, Lys204, and Asp209. Asn237, Asn259, Asn269, Asn285, and Asn388 each carry an N-linked (GlcNAc...) asparagine glycan. The PLD phosphodiesterase 2 domain occupies 412 to 438 (YARVNHNKYMVTDRVAYIGTSNWSGDY). Catalysis depends on residues His417, Lys419, and Asp424. 3 N-linked (GlcNAc...) asparagine glycosylation sites follow: Asn433, Asn450, and Asn476.

The protein belongs to the phospholipase D family. N-glycosylated. In terms of processing, proteolytically processed to a soluble form that is stable within endosomes and lysosomes. During transport through the secretory pathway becomes proteolysed by cysteine proteases, thereby releasing a stable soluble lysosomal lumenal polypeptide, whereas the transmembrane-bound fragment is rapidly degraded. Its transport route to lysosomes involves ubiquitination and the ESCRT complex. Post-translationally, ubiquitinated. Ubiquitination mediates sorting into lysosomes.

It localises to the endoplasmic reticulum membrane. The protein localises to the lysosome lumen. Its subcellular location is the early endosome membrane. The protein resides in the late endosome membrane. It is found in the golgi apparatus membrane. It localises to the endosome membrane. The enzyme catalyses Exonucleolytic cleavage in the 5'- to 3'-direction to yield nucleoside 3'-phosphates.. Its function is as follows. 5'-&gt;3' DNA exonuclease which digests single-stranded DNA (ssDNA). Regulates inflammatory cytokine responses via the degradation of nucleic acids, by reducing the concentration of ssDNA able to stimulate TLR9, a nucleotide-sensing receptor in collaboration with PLD4. May be important in myotube formation. Plays a role in lysosomal homeostasis. Involved in the regulation of endosomal protein sorting. In Xenopus laevis (African clawed frog), this protein is 5'-3' exonuclease PLD3 (pld3).